A 334-amino-acid chain; its full sequence is DNA-directed RNA polymerase subunit alpha (334 aa).

Residues 1 to 234 (MQRSLNEFLT…QQLAVFVDFD (234 aa)) are alpha N-terminal domain (alpha-NTD). The tract at residues 248 to 334 (IDPILLRPVD…IRGDDRVLGG (87 aa)) is alpha C-terminal domain (alpha-CTD).

This sequence belongs to the RNA polymerase alpha chain family. Homodimer. The RNAP catalytic core consists of 2 alpha, 1 beta, 1 beta' and 1 omega subunit. When a sigma factor is associated with the core the holoenzyme is formed, which can initiate transcription.

The catalysed reaction is RNA(n) + a ribonucleoside 5'-triphosphate = RNA(n+1) + diphosphate. In terms of biological role, DNA-dependent RNA polymerase catalyzes the transcription of DNA into RNA using the four ribonucleoside triphosphates as substrates. The chain is DNA-directed RNA polymerase subunit alpha from Hahella chejuensis (strain KCTC 2396).